The primary structure comprises 508 residues: Glycerol kinase (508 aa).

Residue T15 coordinates ADP. Residues T15, S16, and S17 each contribute to the ATP site. T15 is a sn-glycerol 3-phosphate binding site. Position 19 (R19) interacts with ADP. R85, E86, Y138, and D251 together coordinate sn-glycerol 3-phosphate. Residues R85, E86, Y138, D251, and Q252 each coordinate glycerol. The ADP site is built by T273, G317, and G419. ATP-binding residues include T273, G317, and G419.

This sequence belongs to the FGGY kinase family.

It carries out the reaction glycerol + ATP = sn-glycerol 3-phosphate + ADP + H(+). The protein operates within polyol metabolism; glycerol degradation via glycerol kinase pathway; sn-glycerol 3-phosphate from glycerol: step 1/1. With respect to regulation, inhibited by fructose 1,6-bisphosphate (FBP). Its function is as follows. Key enzyme in the regulation of glycerol uptake and metabolism. Catalyzes the phosphorylation of glycerol to yield sn-glycerol 3-phosphate. In Mycoplasma pneumoniae (strain ATCC 29342 / M129 / Subtype 1) (Mycoplasmoides pneumoniae), this protein is Glycerol kinase.